The primary structure comprises 207 residues: Large ribosomal subunit protein uL4 (207 aa).

Residues 49-78 form a disordered region; the sequence is HAVKNRSAVSGGGRKPWRQKGTGRARQGSI.

This sequence belongs to the universal ribosomal protein uL4 family. Part of the 50S ribosomal subunit.

Functionally, one of the primary rRNA binding proteins, this protein initially binds near the 5'-end of the 23S rRNA. It is important during the early stages of 50S assembly. It makes multiple contacts with different domains of the 23S rRNA in the assembled 50S subunit and ribosome. Forms part of the polypeptide exit tunnel. This Streptococcus pyogenes serotype M1 protein is Large ribosomal subunit protein uL4 (rplD).